Consider the following 187-residue polypeptide: UPF0301 protein lpl0620 (187 aa).

The protein belongs to the UPF0301 (AlgH) family.

The protein is UPF0301 protein lpl0620 of Legionella pneumophila (strain Lens).